Here is a 74-residue protein sequence, read N- to C-terminus: Large ribosomal subunit protein bL31 (74 aa).

Belongs to the bacterial ribosomal protein bL31 family. Type A subfamily. In terms of assembly, part of the 50S ribosomal subunit.

In terms of biological role, binds the 23S rRNA. The chain is Large ribosomal subunit protein bL31 from Afipia carboxidovorans (strain ATCC 49405 / DSM 1227 / KCTC 32145 / OM5) (Oligotropha carboxidovorans).